The sequence spans 487 residues: N-succinylglutamate 5-semialdehyde dehydrogenase (487 aa).

221-226 serves as a coordination point for NAD(+); the sequence is GSSDTG. Active-site residues include Glu-244 and Cys-278.

This sequence belongs to the aldehyde dehydrogenase family. AstD subfamily.

The enzyme catalyses N-succinyl-L-glutamate 5-semialdehyde + NAD(+) + H2O = N-succinyl-L-glutamate + NADH + 2 H(+). Its pathway is amino-acid degradation; L-arginine degradation via AST pathway; L-glutamate and succinate from L-arginine: step 4/5. Its function is as follows. Catalyzes the NAD-dependent reduction of succinylglutamate semialdehyde into succinylglutamate. This Burkholderia vietnamiensis (strain G4 / LMG 22486) (Burkholderia cepacia (strain R1808)) protein is N-succinylglutamate 5-semialdehyde dehydrogenase.